A 318-amino-acid polypeptide reads, in one-letter code: Ribose-phosphate pyrophosphokinase 2 (318 aa).

An ATP-binding site is contributed by 96-101 (RQDKKD). Residues Asp-128, His-130, Asp-139, and Asp-143 each coordinate Mg(2+). Position 130 (His-130) interacts with ATP. The interval 212 to 227 (KDRVAILVDDMADTCG) is binding of phosphoribosylpyrophosphate.

The protein belongs to the ribose-phosphate pyrophosphokinase family. As to quaternary structure, homodimer. The active form is probably a hexamer composed of 3 homodimers. Mg(2+) is required as a cofactor.

It carries out the reaction D-ribose 5-phosphate + ATP = 5-phospho-alpha-D-ribose 1-diphosphate + AMP + H(+). Its pathway is metabolic intermediate biosynthesis; 5-phospho-alpha-D-ribose 1-diphosphate biosynthesis; 5-phospho-alpha-D-ribose 1-diphosphate from D-ribose 5-phosphate (route I): step 1/1. Activated by magnesium and inorganic phosphate. Competitively or non-competitively inhibited by ADP, 2,3-bisphosphoglyceride or GDP. Its function is as follows. Catalyzes the synthesis of phosphoribosylpyrophosphate (PRPP) that is essential for nucleotide synthesis. The chain is Ribose-phosphate pyrophosphokinase 2 (PRPS2) from Homo sapiens (Human).